Reading from the N-terminus, the 122-residue chain is Small ribosomal subunit protein uS13 (122 aa).

Positions 93-122 (RRGLPVRGQRTKTNARTRKGPKKTIAGKKK) are disordered.

It belongs to the universal ribosomal protein uS13 family. Part of the 30S ribosomal subunit. Forms a loose heterodimer with protein S19. Forms two bridges to the 50S subunit in the 70S ribosome.

In terms of biological role, located at the top of the head of the 30S subunit, it contacts several helices of the 16S rRNA. In the 70S ribosome it contacts the 23S rRNA (bridge B1a) and protein L5 of the 50S subunit (bridge B1b), connecting the 2 subunits; these bridges are implicated in subunit movement. Contacts the tRNAs in the A and P-sites. The chain is Small ribosomal subunit protein uS13 from Corynebacterium kroppenstedtii (strain DSM 44385 / JCM 11950 / CIP 105744 / CCUG 35717).